The following is a 647-amino-acid chain: 1-deoxy-D-xylulose-5-phosphate synthase (647 aa).

Residues His74 and 115–117 (GHS) each bind thiamine diphosphate. Asp146 contacts Mg(2+). Thiamine diphosphate is bound by residues 147-148 (GA), Asn175, Tyr286, and Glu367. Asn175 lines the Mg(2+) pocket.

Belongs to the transketolase family. DXPS subfamily. In terms of assembly, homodimer. Requires Mg(2+) as cofactor. The cofactor is thiamine diphosphate.

The catalysed reaction is D-glyceraldehyde 3-phosphate + pyruvate + H(+) = 1-deoxy-D-xylulose 5-phosphate + CO2. It functions in the pathway metabolic intermediate biosynthesis; 1-deoxy-D-xylulose 5-phosphate biosynthesis; 1-deoxy-D-xylulose 5-phosphate from D-glyceraldehyde 3-phosphate and pyruvate: step 1/1. In terms of biological role, catalyzes the acyloin condensation reaction between C atoms 2 and 3 of pyruvate and glyceraldehyde 3-phosphate to yield 1-deoxy-D-xylulose-5-phosphate (DXP). In Heliobacterium modesticaldum (strain ATCC 51547 / Ice1), this protein is 1-deoxy-D-xylulose-5-phosphate synthase.